A 270-amino-acid polypeptide reads, in one-letter code: tRNA pseudouridine synthase A (270 aa).

Catalysis depends on Asp60, which acts as the Nucleophile. Residues 107-111 are RNA binding; the sequence is FHARF. Tyr118 serves as a coordination point for substrate. The interval 168–172 is interaction with tRNA; that stretch reads QCQSR.

It belongs to the tRNA pseudouridine synthase TruA family. Homodimer.

The catalysed reaction is uridine(38/39/40) in tRNA = pseudouridine(38/39/40) in tRNA. Functionally, formation of pseudouridine at positions 38, 39 and 40 in the anticodon stem and loop of transfer RNAs. This chain is tRNA pseudouridine synthase A, found in Klebsiella pneumoniae (strain 342).